Consider the following 511-residue polypeptide: RNA polymerase principal sigma factor HrdB (511 aa).

A disordered region spans residues 72-186; that stretch reads SAAEPKRTRK…AATEEPEGTE (115 aa). Residues 78–93 show a composition bias toward basic residues; the sequence is RTRKSVAAKSPAKRTA. The segment covering 94 to 121 has biased composition (low complexity); sequence TKAVAAKPVTSRKATAPAAPAAPATEPA. The segment covering 132–158 has biased composition (basic residues); that stretch reads AAAKKTTAKKATAKKTTAKKAAAKKTT. Residues 211-347 form a binds RNA polymerase-binding protein RbpA region; that stretch reads TADPVKDYLK…ITRAMADQAR (137 aa). The segment at 278-348 is sigma-70 factor domain-2; that stretch reads LLEANLRLVV…TRAMADQART (71 aa). The Interaction with polymerase core subunit RpoC motif lies at 302 to 305; it reads DLIQ. The interval 357–433 is sigma-70 factor domain-3; that stretch reads EVINKLARVQ…DSEAVVPADA (77 aa). The interval 446–499 is sigma-70 factor domain-4; sequence VLDTLSEREAGVVSMRFGLTDGQPKTLDEIGKVYGVTRERIRQIESKTMSKLRH. Residues 472-491 constitute a DNA-binding region (H-T-H motif); sequence LDEIGKVYGVTRERIRQIES.

It belongs to the sigma-70 factor family. As to quaternary structure, homotrimer (Potential). interacts transiently with the RNA polymerase core complex. Interacts with RNA polymerase-binding protein RbpA via its sigma-2 region (residues 211-347) in a free form.

In terms of biological role, sigma factors are initiation factors that promote the attachment of RNA polymerase to specific initiation sites and are then released. This sigma factor is the primary sigma factor during exponential growth. Its activity is stimulated by RbpA. This Streptomyces coelicolor (strain ATCC BAA-471 / A3(2) / M145) protein is RNA polymerase principal sigma factor HrdB (hrdB).